A 179-amino-acid chain; its full sequence is Protein HEADING DATE 3A (179 aa).

This sequence belongs to the phosphatidylethanolamine-binding protein family. As to expression, expressed in the inner region of the SAM, stem and leaf blade vascular tissues (at protein level).

It localises to the cytoplasm. Its subcellular location is the nucleus. Functionally, probable mobile flower-promoting signal (florigen) that moves from the leaf to the shoot apical meristem (SAM) and induces flowering. Promotes the transition from vegetative growth to flowering downstream of HD1 and EHD1 under short day (SD) conditions. Acts upstream of MADS14 and MADS15. The protein is Protein HEADING DATE 3A (HD3A) of Oryza sativa subsp. japonica (Rice).